Here is a 150-residue protein sequence, read N- to C-terminus: Submaxillary gland androgen-regulated protein 2, isoform alpha (150 aa).

The signal sequence occupies residues 1–22; sequence MKALYMVFVLWVLIGCFLSGEC.

It localises to the secreted. Its function is as follows. May play a role in protection or detoxification. The chain is Submaxillary gland androgen-regulated protein 2, isoform alpha (Smr2) from Mus musculus (Mouse).